The chain runs to 108 residues: Peptidyl-prolyl cis-trans isomerase FKBP1B (108 aa).

In terms of domain architecture, PPIase FKBP-type spans 20–108; the sequence is GQICVVHYTG…IFDVELLSLE (89 aa).

It belongs to the FKBP-type PPIase family. FKBP1 subfamily. As to quaternary structure, identified in a complex composed of RYR2, FKBP1B, PKA catalytic subunit, PRKAR2A, AKAP6, and the protein phosphatases PP2A and PP1. Interacts directly with RYR2.

Its subcellular location is the cytoplasm. The protein resides in the sarcoplasmic reticulum. The enzyme catalyses [protein]-peptidylproline (omega=180) = [protein]-peptidylproline (omega=0). With respect to regulation, inhibited by both FK506 and rapamycin. In terms of biological role, has the potential to contribute to the immunosuppressive and toxic effects of FK506 and rapamycin. PPIases accelerate the folding of proteins. It catalyzes the cis-trans isomerization of proline imidic peptide bonds in oligopeptides. This Mus musculus (Mouse) protein is Peptidyl-prolyl cis-trans isomerase FKBP1B (Fkbp1b).